Here is a 1456-residue protein sequence, read N- to C-terminus: MAKVREVYQSFTDSTTKTLIQDEAYRNIRPIMEKHKLSNPYAQTIEAANDLEGFGIATNPYSIELHTHAAAKTIENKLLEVLGSLLPQEPVTFMFLKPRKLNFMRRNPRIKDIFHNVAIEPRDVARYPKETIIHKLAEIETDTAYISDTLHFLDPSYIVETFQNCPKLQTLYATLVLPSEAAFKMESTHPNIYSLKYFGDGFQYIPGNHGGGAYHHEFTDLQWLKVGKIKWRDPKDGLLGHLNYTHEQVDTHTVTVQLQESFAANHLYCIRRGNMMTPEVRTFGQPDRYVLPPQIFLPKVHNCKKPILKKTMMQLFLYVRTVKVAKNCDIFAKVRQLIKSSDRDKFSAVELVYLVSYMEFLAALQATTCFSDTLSGGLLTKTLAPVRAWIQEKKMQLCGLEDYVKLVKAVDWRPVDFSFKVETWDFRFTQLGMWKAFQPSELSDVEEMNNFFDDGDLLDCFTRMPAYAVNAEEDLAGMRGNNQEETSTAPREPEGEKKEYINPAETFLDKLTRKHNRETRSRAAKKAKRLAEIQDSMNRDRTEEGSHKTPNMGEAPSNADLPGVNEVEAGTTFPTLKALPQKWEDASSTDSSTIDPTEIIPGEEDDKAATQKVVVGLPWKHWLPQLNAVGFKALEIQRDRNGTMIMPITEMVFGLDKEEFPEGTPEALARELKAMNRSPTTIPLDLLRARDYGSDVKNKRIGAITKTQAASWGEYLTGKIESLPERKVAACVIHGAGGSGKSHAIQKALREIGKGSDITVVLPTNELRLDWSKKVPNTEPYMFKTYEKALIGGTGSIVIFDDYSKLPPGYIEALVSFSTKIKLIILTGDSRQSVYHETSDDASIRHLGPATEVFAKYCRYYLNATHRNKKDLANMLGVYSERTGTTEISMSSEFLEGVPTLVPSDEKRRLYMGTGRNDTFTYAGCQGLTKPKVQIVLDHNTQVCSANVMYSALSRATDRIHFINTSANSSAFWEKLDSTPYLKTFLSVVREHALKEYEPAEAEPIKEPEPQTHMCVENEESVLEEYKEELLEKFDREIHSDAHGHSNCVQTEDTTIQLFSHQEAKDETLLWATIDARLKTSNQESNFREFLSKRDIGDVLFLNYQKAMGLPKEPIPFSQEVWEACAHEVQSKYLSKSKCNLINGTVRQSPDFDENKIMVFLKSQWVTKVEKLGLPKIKPGQTIAAFYQQTVMLFGTMARYMRWFRQAFQPKEVFINCETTPEDMSAWALSNWNFTRPSLANDYTAFDQSQDGAMLQFEVLKAKHHCIPEEIIQAYIDIKTNAQIFLGTLSIMRLTGEGPTFDANTECNIAFTHTKFDIPAGTAQVYAGDDSALDCVPEVKQSFHRLEDKLLLKSKPVITQQKKGSWPEFCGWLITPKGVMKDPIKLHVSLKLAEAKGELRKCQDSYEIDLSYAYDHKDSLHDLFDEKQCQAHTLTCRTLIKSGRGTVSLPRLKNFL.

Residues 59 to 224 (NPYSIELHTH…HHEFTDLQWL (166 aa)) enclose the Alphavirus-like MT domain. Disordered regions lie at residues 474-499 (DLAG…EKKE), 513-563 (RKHN…DLPG), and 581-600 (QKWE…TEII). Residues 480-489 (GNNQEETSTA) show a composition bias toward polar residues. Residues 513–528 (RKHNRETRSRAAKKAK) show a composition bias toward basic residues. Over residues 529–547 (RLAEIQDSMNRDRTEEGSH) the composition is skewed to basic and acidic residues. Positions 586 to 595 (ASSTDSSTID) are enriched in polar residues. Residues 695–862 (DVKNKRIGAI…VFAKYCRYYL (168 aa)) form the (+)RNA virus helicase ATP-binding domain. ATP is bound at residue 735–742 (GAGGSGKS). The (+)RNA virus helicase C-terminal domain occupies 863-997 (NATHRNKKDL…VVREHALKEY (135 aa)). In terms of domain architecture, RdRp catalytic spans 1236–1343 (RPSLANDYTA…DCVPEVKQSF (108 aa)).

Belongs to the potexvirus/carlavirus RNA replication protein family.

It carries out the reaction RNA(n) + a ribonucleoside 5'-triphosphate = RNA(n+1) + diphosphate. The catalysed reaction is ATP + H2O = ADP + phosphate + H(+). Functionally, RNA replication. The central part of this protein possibly functions as an ATP-binding helicase. The sequence is that of RNA replication protein from Brassica campestris (Field mustard).